A 955-amino-acid polypeptide reads, in one-letter code: Histone deacetylase 6 (955 aa).

Histone deacetylase regions lie at residues 15–337 and 425–749; these read TLIG…YAPF and METL…VLQN. Histidine 146 (1) is an active-site residue. Catalysis depends on histidine 561, which acts as the 2. The disordered stretch occupies residues 815–840; the sequence is SIDMADQSSSSGSSSSSTRPSHNLEI. Low complexity predominate over residues 818–831; the sequence is MADQSSSSGSSSSS. The segment at 853–951 adopts a UBP-type zinc-finger fold; that stretch reads ATCPHLKEVK…SAAHESKFGE (99 aa). Zn(2+) contacts are provided by cysteine 855, histidine 857, cysteine 875, cysteine 878, cysteine 887, cysteine 890, and cysteine 895. The segment at 896–898 is ubiquitin binding; sequence GRF. Histidine 902, histidine 906, histidine 912, cysteine 925, and cysteine 928 together coordinate Zn(2+). The interval 924 to 931 is ubiquitin binding; that stretch reads WCYPCDSY.

The protein belongs to the histone deacetylase family. HD type 2 subfamily. Zn(2+) is required as a cofactor.

It localises to the nucleus. The catalysed reaction is N(6)-acetyl-L-lysyl-[histone] + H2O = L-lysyl-[histone] + acetate. Its function is as follows. Probable histone deacetylase. Histone deacetylases are responsible for the deacetylation of lysine residues on the N-terminal part of the core histones (H2A, H2B, H3 and H4). Histone deacetylation gives a tag for epigenetic repression and plays an important role in transcriptional regulation, cell cycle progression and developmental events. Histone deacetylases act via the formation of large multiprotein complexes. This chain is Histone deacetylase 6 (hda-6), found in Caenorhabditis elegans.